The following is a 406-amino-acid chain: 1-deoxy-D-xylulose 5-phosphate reductoisomerase (406 aa).

Residues Thr-21, Gly-22, Ser-23, Ile-24, Gly-47, Gln-50, and Asn-127 each contribute to the NADPH site. Residue Lys-128 participates in 1-deoxy-D-xylulose 5-phosphate binding. NADPH is bound at residue Glu-129. Position 151 (Asp-151) interacts with Mn(2+). 4 residues coordinate 1-deoxy-D-xylulose 5-phosphate: Ser-152, Glu-153, Ser-177, and His-200. Glu-153 is a Mn(2+) binding site. Gly-206 lines the NADPH pocket. Residues Ser-213, Asn-218, Lys-219, and Glu-222 each coordinate 1-deoxy-D-xylulose 5-phosphate. Mn(2+) is bound at residue Glu-222.

This sequence belongs to the DXR family. The cofactor is Mg(2+). Requires Mn(2+) as cofactor.

The catalysed reaction is 2-C-methyl-D-erythritol 4-phosphate + NADP(+) = 1-deoxy-D-xylulose 5-phosphate + NADPH + H(+). The protein operates within isoprenoid biosynthesis; isopentenyl diphosphate biosynthesis via DXP pathway; isopentenyl diphosphate from 1-deoxy-D-xylulose 5-phosphate: step 1/6. Catalyzes the NADPH-dependent rearrangement and reduction of 1-deoxy-D-xylulose-5-phosphate (DXP) to 2-C-methyl-D-erythritol 4-phosphate (MEP). This Mycobacterium leprae (strain Br4923) protein is 1-deoxy-D-xylulose 5-phosphate reductoisomerase.